Here is a 226-residue protein sequence, read N- to C-terminus: SPI-1 type 3 secretion system stator protein (226 aa).

As to quaternary structure, the core secretion machinery of the T3SS is composed of approximately 20 different proteins, including cytoplasmic components, a base, an export apparatus and a needle. This subunit is part of the cytosolic complex. Interacts directly with InvC/SctN1 (T3SS-1 ATPase) and SpaO/SctQ (the major sorting platform component).

It is found in the cytoplasm. In terms of biological role, component of the type III secretion system (T3SS), also called injectisome, which is used to inject bacterial effector proteins into eukaryotic host cells. Acts as a regulator of the InvC/SctN1 ATPase activity. Required for invasion and secretion. The chain is SPI-1 type 3 secretion system stator protein from Salmonella typhimurium (strain SL1344).